The sequence spans 160 residues: UPF0262 protein Mrad2831_3513 (160 aa).

This sequence belongs to the UPF0262 family.

The protein is UPF0262 protein Mrad2831_3513 of Methylobacterium radiotolerans (strain ATCC 27329 / DSM 1819 / JCM 2831 / NBRC 15690 / NCIMB 10815 / 0-1).